The chain runs to 90 residues: Small ribosomal subunit protein bS16 (90 aa).

It belongs to the bacterial ribosomal protein bS16 family.

The chain is Small ribosomal subunit protein bS16 from Lysinibacillus sphaericus (strain C3-41).